The following is a 318-amino-acid chain: Elongation factor Ts, mitochondrial (318 aa).

A mitochondrion-targeting transit peptide spans 1-18 (MLLQRFFTRALHSTRQLY).

Belongs to the EF-Ts family.

The protein resides in the mitochondrion. Functionally, associates with the EF-Tu.GDP complex and induces the exchange of GDP to GTP. It remains bound to the aminoacyl-tRNA.EF-Tu.GTP complex up to the GTP hydrolysis stage on the ribosome. The protein is Elongation factor Ts, mitochondrial of Drosophila melanogaster (Fruit fly).